We begin with the raw amino-acid sequence, 211 residues long: Pyrrolidone-carboxylate peptidase 1 (211 aa).

Active-site residues include Glu79, Cys142, and His164.

It belongs to the peptidase C15 family. Homotetramer.

The protein resides in the cytoplasm. It catalyses the reaction Release of an N-terminal pyroglutamyl group from a polypeptide, the second amino acid generally not being Pro.. In terms of biological role, removes 5-oxoproline from various penultimate amino acid residues except L-proline. This is Pyrrolidone-carboxylate peptidase 1 (pcp1) from Saccharolobus solfataricus (strain ATCC 35092 / DSM 1617 / JCM 11322 / P2) (Sulfolobus solfataricus).